Consider the following 1050-residue polypeptide: Calmodulin-binding transcription activator 2 (1050 aa).

Positions 15–141 (IKQLLSEAQH…YLEVKGNRMS (127 aa)) form a DNA-binding region, CG-1. Polar residues-rich tracts occupy residues 141 to 171 (STSG…SSIL) and 183 to 196 (SRQA…NPEP). Disordered stretches follow at residues 141-196 (STSG…NPEP) and 223-246 (NRDG…SGDV). ANK repeat units follow at residues 661 to 690 (DGQG…SINF) and 694 to 723 (NGWS…DAGA). 2 IQ domains span residues 870 to 899 (VHAA…RIVK) and 893 to 922 (IRQR…SVGL). The calmodulin-binding stretch occupies residues 918-940 (WSVGLLEKIILRWRRKGSGLRGF). The stretch at 957-985 (QEDDYDFLKEGRKQTEERLQKALTRVKSM) forms a coiled coil. Serine 984 carries the post-translational modification Phosphoserine.

This sequence belongs to the CAMTA family. Expressed in roots, stems, old leaves, petals, sepals, top of carpels, stigmas, stamen filaments, anthers and siliques, but not in pollen.

The protein resides in the nucleus. In terms of biological role, transcription activator that binds to the DNA consensus sequence 5'-[ACG]CGCG[GTC]-3'. Regulates transcriptional activity in response to calcium signals. Binds calmodulin in a calcium-dependent manner. Involved in freezing tolerance in association with CAMTA1 and CAMTA3. Contributes together with CAMTA1 and CAMTA3 to the positive regulation of the cold-induced expression of DREB1A/CBF3, DREB1B/CBF1 and DREB1C/CBF2. Involved together with CAMTA3 and CAMTA4 in the positive regulation of a general stress response. Involved in tolerance to aluminum. Binds to the promoter of ALMT1 transporter and contributes to the positive regulation of aluminum-induced expression of ALMT1. In Arabidopsis thaliana (Mouse-ear cress), this protein is Calmodulin-binding transcription activator 2.